The sequence spans 283 residues: Aldo-keto reductase Mmcs_1938 (283 aa).

Y58 serves as the catalytic Proton donor. 11 residues coordinate NADPH: G196, L198, V200, I236, R238, S239, A240, R244, S247, N248, and R274.

It belongs to the aldo/keto reductase family.

The polypeptide is Aldo-keto reductase Mmcs_1938 (Mycobacterium sp. (strain MCS)).